Consider the following 506-residue polypeptide: Histone acetyltransferase esa-1 (506 aa).

Residues 1 to 24 are disordered; that stretch reads MSPPGGDATVGSDEKRQKGKATPD. The 53-residue stretch at 26–78 folds into the Tudor-knot domain; it reads IKMGCIAMVMKEGQLRRAEILSIKDTKSGRQFYCNFDNFNKRLDEWVPAARID. A disordered region spans residues 82–215; it reads DVEWPNPDKD…LRTSGSMTQN (134 aa). Residues 87-98 show a composition bias toward basic and acidic residues; it reads NPDKDKQKDAKT. Residues 109–120 show a composition bias toward basic residues; the sequence is QPSKKNNQKKAS. The span at 167–178 shows a compositional bias: basic and acidic residues; it reads GGDKGVKRKADE. An MYST-type HAT domain is found at 220–494; the sequence is SRIRNISKVE…IDPERIQWKP (275 aa). Residues 253-278 form a C2HC MYST-type zinc finger; the sequence is IYICEFCLSYYGELKSFVRHRQKCTL. Positions 303 to 324 match the ESA1-RPD3 motif motif; that stretch reads RTWCRNLCLLSKMFLDHKTLYY. An N6-acetyllysine; by autocatalysis modification is found at K320. Acetyl-CoA is bound by residues 361-365 and 370-376; these read ACILT and QRKGYGR. The active-site Proton donor/acceptor is E396. Position 400 (S400) interacts with acetyl-CoA.

The protein belongs to the MYST (SAS/MOZ) family. Component of the NuA4 histone acetyltransferase complex. Autoacetylation at Lys-320 is required for proper function.

It localises to the nucleus. The protein resides in the chromosome. The enzyme catalyses L-lysyl-[histone] + acetyl-CoA = N(6)-acetyl-L-lysyl-[histone] + CoA + H(+). It carries out the reaction L-lysyl-[protein] + acetyl-CoA = N(6)-acetyl-L-lysyl-[protein] + CoA + H(+). The catalysed reaction is 2-hydroxyisobutanoyl-CoA + L-lysyl-[protein] = N(6)-(2-hydroxyisobutanoyl)-L-lysyl-[protein] + CoA + H(+). It catalyses the reaction (2E)-butenoyl-CoA + L-lysyl-[protein] = N(6)-(2E)-butenoyl-L-lysyl-[protein] + CoA + H(+). In terms of biological role, catalytic component of the NuA4 histone acetyltransferase (HAT) complex which is involved in epigenetic transcriptional activation of selected genes principally by acetylation of nucleosomal histones H4, H3, H2B, H2A and H2A variant H2A.Z. Acetylates histone H4 to form H4K5ac, H4K8ac, H4K12ac and H4K16ac, histone H3 to form H3K14ac, and histone H2A to form H2AK4ac and H2AK7ac. The NuA4 complex is involved in the DNA damage response and is required for chromosome segregation. The NuA4 complex plays a direct role in repair of DNA double-strand breaks (DSBs) through homologous recombination. Recruitment to promoters depends on H3K4me. Also acetylates non-histone proteins. In addition to protein acetyltransferase, can use different acyl-CoA substrates, such as 2-hydroxyisobutanoyl-CoA (2-hydroxyisobutyryl-CoA) or (2E)-butenoyl-CoA (crotonyl-CoA), and is able to mediate protein 2-hydroxyisobutyrylation and crotonylation, respectively. In Neurospora crassa (strain ATCC 24698 / 74-OR23-1A / CBS 708.71 / DSM 1257 / FGSC 987), this protein is Histone acetyltransferase esa-1 (esa-1).